We begin with the raw amino-acid sequence, 267 residues long: tRNA (guanine-N(1)-)-methyltransferase (267 aa).

Residues Gly119 and 139-144 (IGDYVL) contribute to the S-adenosyl-L-methionine site.

This sequence belongs to the RNA methyltransferase TrmD family. In terms of assembly, homodimer.

The protein localises to the cytoplasm. It carries out the reaction guanosine(37) in tRNA + S-adenosyl-L-methionine = N(1)-methylguanosine(37) in tRNA + S-adenosyl-L-homocysteine + H(+). Specifically methylates guanosine-37 in various tRNAs. The sequence is that of tRNA (guanine-N(1)-)-methyltransferase from Chromohalobacter salexigens (strain ATCC BAA-138 / DSM 3043 / CIP 106854 / NCIMB 13768 / 1H11).